The sequence spans 349 residues: UDP-3-O-acylglucosamine N-acyltransferase (349 aa).

The active-site Proton acceptor is the His246.

It belongs to the transferase hexapeptide repeat family. LpxD subfamily. In terms of assembly, homotrimer.

It carries out the reaction a UDP-3-O-[(3R)-3-hydroxyacyl]-alpha-D-glucosamine + a (3R)-hydroxyacyl-[ACP] = a UDP-2-N,3-O-bis[(3R)-3-hydroxyacyl]-alpha-D-glucosamine + holo-[ACP] + H(+). It functions in the pathway bacterial outer membrane biogenesis; LPS lipid A biosynthesis. Functionally, catalyzes the N-acylation of UDP-3-O-acylglucosamine using 3-hydroxyacyl-ACP as the acyl donor. Is involved in the biosynthesis of lipid A, a phosphorylated glycolipid that anchors the lipopolysaccharide to the outer membrane of the cell. This Trichormus variabilis (strain ATCC 29413 / PCC 7937) (Anabaena variabilis) protein is UDP-3-O-acylglucosamine N-acyltransferase.